A 124-amino-acid chain; its full sequence is Small ribosomal subunit protein uS13 (124 aa).

Residues 98-124 form a disordered region; it reads VRGQRTRCNARTRKGPRKTVGAKRKEK.

The protein belongs to the universal ribosomal protein uS13 family. In terms of assembly, part of the 30S ribosomal subunit. Forms a loose heterodimer with protein S19. Forms two bridges to the 50S subunit in the 70S ribosome.

Its function is as follows. Located at the top of the head of the 30S subunit, it contacts several helices of the 16S rRNA. In the 70S ribosome it contacts the 23S rRNA (bridge B1a) and protein L5 of the 50S subunit (bridge B1b), connecting the 2 subunits; these bridges are implicated in subunit movement. Contacts the tRNAs in the A and P-sites. This Dictyoglomus thermophilum (strain ATCC 35947 / DSM 3960 / H-6-12) protein is Small ribosomal subunit protein uS13.